Reading from the N-terminus, the 162-residue chain is Ribosome-binding factor A (162 aa).

The disordered stretch occupies residues 124–162; that stretch reads ARVRSGAKPAGEADPYRESGSGVEPGRDGSIGDDDQPEY.

Belongs to the RbfA family. As to quaternary structure, monomer. Binds 30S ribosomal subunits, but not 50S ribosomal subunits or 70S ribosomes.

The protein localises to the cytoplasm. Functionally, one of several proteins that assist in the late maturation steps of the functional core of the 30S ribosomal subunit. Associates with free 30S ribosomal subunits (but not with 30S subunits that are part of 70S ribosomes or polysomes). Required for efficient processing of 16S rRNA. May interact with the 5'-terminal helix region of 16S rRNA. This chain is Ribosome-binding factor A, found in Mycolicibacterium paratuberculosis (strain ATCC BAA-968 / K-10) (Mycobacterium paratuberculosis).